Here is a 547-residue protein sequence, read N- to C-terminus: Glucose-6-phosphate isomerase (547 aa).

Residue Glu-351 is the Proton donor of the active site. Active-site residues include His-382 and Lys-510.

This sequence belongs to the GPI family.

The protein resides in the cytoplasm. It carries out the reaction alpha-D-glucose 6-phosphate = beta-D-fructose 6-phosphate. The protein operates within carbohydrate biosynthesis; gluconeogenesis. Its pathway is carbohydrate degradation; glycolysis; D-glyceraldehyde 3-phosphate and glycerone phosphate from D-glucose: step 2/4. Its function is as follows. Catalyzes the reversible isomerization of glucose-6-phosphate to fructose-6-phosphate. This is Glucose-6-phosphate isomerase from Beijerinckia indica subsp. indica (strain ATCC 9039 / DSM 1715 / NCIMB 8712).